Consider the following 398-residue polypeptide: MGTCDIVTEANISSGPESNTTGITAFSMPSWQLALWATAYLALVLVAVTGNAIVIWIILAHRRMRTVTNYFIVNLALADLCMAAFNAAFNFVYASHNIWYFGRAFCYFQNLFPITAMFVSIYSMTAIAADRYMAIVHPFQPRLSAPSTKAVIAGIWLVALALASPQCFYSTVTMDQGATKCVVAWPEDSGGKTLLLYHLVVIALIYFLPLAVMFVAYSVIGLTLWRRAVPGHQAHGANLRHLQAMKKFVKTMVLVVLTFAICWLPYHLYFILGSFQEDIYCHKFIQQVYLALFWLAMSSTMYNPIIYCCLNHRFRSGFRLAFRCCPWVTPTKEDKLELTPTTSLSTRVNRCHTKETLFMAGDTAPSEATSGEAGRPQDGSGLWFGYGLLAPTKTHVEI.

Residues 1-32 (MGTCDIVTEANISSGPESNTTGITAFSMPSWQ) lie on the Extracellular side of the membrane. Asn-11 and Asn-19 each carry an N-linked (GlcNAc...) asparagine glycan. A helical membrane pass occupies residues 33–56 (LALWATAYLALVLVAVTGNAIVIW). The Cytoplasmic segment spans residues 57–69 (IILAHRRMRTVTN). The chain crosses the membrane as a helical span at residues 70-90 (YFIVNLALADLCMAAFNAAFN). The Extracellular portion of the chain corresponds to 91–107 (FVYASHNIWYFGRAFCY). Cys-106 and Cys-181 form a disulfide bridge. Residues 108 to 129 (FQNLFPITAMFVSIYSMTAIAA) traverse the membrane as a helical segment. Topologically, residues 130–149 (DRYMAIVHPFQPRLSAPSTK) are cytoplasmic. A helical transmembrane segment spans residues 150–170 (AVIAGIWLVALALASPQCFYS). The Extracellular segment spans residues 171–196 (TVTMDQGATKCVVAWPEDSGGKTLLL). A helical transmembrane segment spans residues 197–218 (YHLVVIALIYFLPLAVMFVAYS). The Cytoplasmic portion of the chain corresponds to 219 to 251 (VIGLTLWRRAVPGHQAHGANLRHLQAMKKFVKT). The helical transmembrane segment at 252-272 (MVLVVLTFAICWLPYHLYFIL) threads the bilayer. Residues 273 to 290 (GSFQEDIYCHKFIQQVYL) lie on the Extracellular side of the membrane. Residues 291 to 310 (ALFWLAMSSTMYNPIIYCCL) form a helical membrane-spanning segment. The Cytoplasmic portion of the chain corresponds to 311–398 (NHRFRSGFRL…LAPTKTHVEI (88 aa)). Cys-324 carries S-palmitoyl cysteine lipidation.

The protein belongs to the G-protein coupled receptor 1 family.

It localises to the cell membrane. This is a receptor for the tachykinin neuropeptide substance K (neurokinin A). It is associated with G proteins that activate a phosphatidylinositol-calcium second messenger system. The rank order of affinity of this receptor to tachykinins is: substance K &gt; neuromedin-K &gt; substance P. The chain is Substance-K receptor (TACR2) from Homo sapiens (Human).